Reading from the N-terminus, the 709-residue chain is Mucin-20 (709 aa).

The signal sequence occupies residues 1-25 (MGCLWGLALPLFFFCWEVGVSGSSA). Positions 57-69 (TQTLSAETSSRAS) are enriched in polar residues. Disordered stretches follow at residues 57 to 92 (TQTL…ARET) and 170 to 403 (KGLS…WSPG). Residues 78-92 (AETRGAKRISPARET) are compositionally biased toward basic and acidic residues. Low complexity-rich tracts occupy residues 173-182 (SSESSASSDS), 190-199 (SRASESSASS), 209-218 (SRASESSASS), 228-237 (SRASESSASS), 247-256 (SRASESSASS), 266-275 (SRASESSASS), 285-294 (SRASESSASS), 304-313 (SRASESSASS), 323-332 (SRASESSASS), 342-351 (SRASESSASS), 361-370 (SRASESSASS), and 380-389 (SRASESSASS). 11 consecutive repeat copies span residues 173 to 192 (SSES…PSRA), 193 to 211 (SESS…PSRA), 212 to 230 (SESS…PSRA), 231 to 249 (SESS…PSRA), 250 to 268 (SESS…PSRA), 269 to 287 (SESS…PSRA), 288 to 306 (SESS…PSRA), 307 to 325 (SESS…PSRA), 326 to 344 (SESS…PSRA), 345 to 363 (SESS…PSRA), and 364 to 382 (SESS…PSRA). Residues 173 to 400 (SSESSASSDS…GPHPVITPSW (228 aa)) form a 12 X 20 AA approximate tandem repeats of S-S-E-S-S-A-S-S-D-S-P-H-P-V-I-T-P-S-R-A region. A 12; approximate repeat occupies 383-400 (SESSASSDGPHPVITPSW). A glycan (N-linked (GlcNAc...) asparagine) is linked at N423. Disordered regions lie at residues 434–515 (SSIP…APGA) and 583–657 (NFTP…VSAG). The tract at residues 450–656 (VKASSTSDPP…RTRPTTDVSA (207 aa)) is involved in oligomerization. Over residues 474–489 (VTASAETLSTAGTTES) the composition is skewed to polar residues. Residues 613-652 (TTTNSSRGTNSTLAKITTSAKTTMKPPTATPTTARTRPTT) show a composition bias toward low complexity. N616 and N622 each carry an N-linked (GlcNAc...) asparagine glycan. Residues 657–709 (GENGGFLLLRLSVASPEDLTDPRVAERLMQQLHRELHAHAPHFQVSLLRVRRG) are interaction with MET.

Interacts with MET; oligomerization increases affinity for MET. In terms of tissue distribution, highly expressed in kidney, moderately in placenta, lung, prostate, liver, and digestive system. In the kidney, localized in the proximal tubules but not in the glomerulus or distal tubules. Detected in most of the male urogenital tract epithelia, with the exception of epididymis.

Its subcellular location is the secreted. It is found in the apical cell membrane. It localises to the basolateral cell membrane. The protein resides in the cell projection. The protein localises to the microvillus membrane. Its function is as follows. May regulate MET signaling cascade. Seems to decrease hepatocyte growth factor (HGF)-induced transient MAPK activation. Blocks GRB2 recruitment to MET thus suppressing the GRB2-RAS pathway. Inhibits HGF-induced proliferation of MMP1 and MMP9 expression. This chain is Mucin-20 (MUC20), found in Homo sapiens (Human).